The primary structure comprises 77 residues: Apelin (77 aa).

The N-terminal stretch at 1-22 (MNVKILTLVIVLVVSLLCSASA) is a signal peptide. A disordered region spans residues 21–77 (SAGPMASTEHSKEIEEVGSMRTPLRQNPARAGRSQRPAGWRRRRPRPRLSHKGPMPF). Basic residues predominate over residues 59-71 (GWRRRRPRPRLSH).

This sequence belongs to the apelin family.

It is found in the secreted. It localises to the extracellular space. Peptide hormone that functions as endogenous ligand for the G-protein-coupled apelin receptor (aplnra and/or aplnrb), that plays a role in cadiovascular homeostasis. Functions as a balanced agonist activating both G(i) protein pathway and beta-arrestin pathway of APLNR. Downstream G proteins activation, apelin can inhibit cAMP production and activate key intracellular effectors such as ERKs. On the other hand, APLNR activation induces beta-arrestin recruitment to the membrane leading to desensitization and internalization of the receptor. Apelin blunts cardiac hypertrophic induction from APLNR on response to pathological stimuli, but also induces myocardial hypertrophy under normal conditions. Involved in the regulation of cardiac precursor cell movements during gastrulation and heart morphogenesis. Plays a role in early coronary blood vessels formation. Mediates myocardial contractility in an ERK1/2-dependent manner. May also have a role in the central control of body fluid homeostasis. In Danio rerio (Zebrafish), this protein is Apelin.